Consider the following 416-residue polypeptide: Transmembrane protease serine 11B-like protein (416 aa).

Over 1–15 the chain is Cytoplasmic; it reads MYRPVIASRKSIPPW. The chain crosses the membrane as a helical; Signal-anchor for type II membrane protein span at residues 16 to 36; the sequence is LIILCVLGVLAALGIIIGLLV. Residues 37-416 are Extracellular-facing; it reads HFLAVENKIY…RNWIASKTGI (380 aa). Residues 44–161 enclose the SEA domain; that stretch reads KIYYYQGGFK…GSLKLTEISK (118 aa). Asn-107 carries an N-linked (GlcNAc...) asparagine glycan. A Peptidase S1 domain is found at 185–415; that stretch reads ITGGSTAHKG…YRNWIASKTG (231 aa). A disulfide bridge links Cys-210 with Cys-226. Catalysis depends on His-225, which acts as the Charge relay system. A glycan (N-linked (GlcNAc...) asparagine) is linked at Asn-235. The Charge relay system role is filled by Asp-270. 2 disulfides stabilise this stretch: Cys-335–Cys-351 and Cys-362–Cys-391. Residue Ser-366 is the Charge relay system of the active site.

The protein belongs to the peptidase S1 family. Expressed in esophagus, cervix, tongue, and testes.

It localises to the cell membrane. Its activity is regulated as follows. Inhibited by aprotinin, leupeptin, benzamidine, SERPINA1, SPINT1 and SPINT2. Functionally, serine protease. The protein is Transmembrane protease serine 11B-like protein (Tmprss11b) of Mus musculus (Mouse).